Reading from the N-terminus, the 244-residue chain is DNA repair protein RecO (244 aa).

It belongs to the RecO family.

Its function is as follows. Involved in DNA repair and RecF pathway recombination. The sequence is that of DNA repair protein RecO from Caldicellulosiruptor saccharolyticus (strain ATCC 43494 / DSM 8903 / Tp8T 6331).